The following is a 994-amino-acid chain: Phosphoenolpyruvate carboxylase (994 aa).

The interval 1 to 66 (MKSSGSARAT…QGRTREDKDR (66 aa)) is disordered. 2 stretches are compositionally biased toward low complexity: residues 14–25 (AVSSSSAPAHAE) and 41–54 (AAAR…AASA). Residues His-204 and Lys-646 contribute to the active site.

This sequence belongs to the PEPCase type 1 family. Mg(2+) is required as a cofactor.

It carries out the reaction oxaloacetate + phosphate = phosphoenolpyruvate + hydrogencarbonate. Its function is as follows. Forms oxaloacetate, a four-carbon dicarboxylic acid source for the tricarboxylic acid cycle. In Burkholderia mallei (strain NCTC 10247), this protein is Phosphoenolpyruvate carboxylase.